The chain runs to 833 residues: Leucine--tRNA ligase (833 aa).

The short motif at 41–52 is the 'HIGH' region element; the sequence is PYPSGAGLHVGH. Residues 610–614 carry the 'KMSKS' region motif; the sequence is KMSKS. K613 serves as a coordination point for ATP.

Belongs to the class-I aminoacyl-tRNA synthetase family.

Its subcellular location is the cytoplasm. It carries out the reaction tRNA(Leu) + L-leucine + ATP = L-leucyl-tRNA(Leu) + AMP + diphosphate. The chain is Leucine--tRNA ligase from Streptococcus pyogenes serotype M12 (strain MGAS2096).